The sequence spans 932 residues: Myelin gene regulatory factor-like A (932 aa).

Low complexity-rich tracts occupy residues 1–19 (MDGY…QQHQ) and 33–48 (QQQQ…QQQQ). Disordered stretches follow at residues 1–63 (MDGY…ISNG), 152–256 (VNSP…LSSS), 269–328 (TNTQ…NENP), 540–568 (VTPP…SNNM), 582–601 (TMNI…LSQL), 613–660 (TQNH…NNNN), and 680–726 (NINN…CHWN). The span at 49-59 (PMNGSNNQLLG) shows a compositional bias: polar residues. The stretch at 127–154 (LDSSFLMLQQQLQDQQQQIAQFNSSVNS) forms a coiled coil. 2 stretches are compositionally biased toward low complexity: residues 152 to 249 (VNSP…ANNT) and 277 to 294 (PRSI…TNSP). The NDT80 DNA-binding region spans 286 to 546 (PNLSPTNSPI…ATQVTPPGDL (261 aa)). A compositionally biased stretch (polar residues) spans 311–328 (ENENSDPPSPMTQYNENP). 2 stretches are compositionally biased toward low complexity: residues 615–660 (NHNN…NNNN) and 680–721 (NINN…NNNN). The 111-residue stretch at 767-877 (SDLRIKYDLK…KQMDEMKLKL (111 aa)) folds into the Peptidase S74 domain. The stretch at 863–895 (TQELSKQMDEMKLKLITYESKLKNLKKKSKNQT) forms a coiled coil. A helical transmembrane segment spans residues 895-915 (TILLIIFMITFLLVALYMYKP).

The protein resides in the membrane. Its function is as follows. Transcription factor which acts as a key regulator of pstA (prestalk-A) cells differentiation. Essential for ecmA-specific gene expression. This is Myelin gene regulatory factor-like A (mrfA) from Dictyostelium discoideum (Social amoeba).